The chain runs to 460 residues: Probable carboxypeptidase ARB_01041 (460 aa).

Residues 1–22 form the signal peptide; the sequence is MQKTYIWALVSLLASSLVDARS. The N-linked (GlcNAc...) asparagine glycan is linked to N98. D175 provides a ligand contact to Zn(2+). E207 serves as the catalytic Proton acceptor. Residue E208 participates in Zn(2+) binding. The N-linked (GlcNAc...) asparagine glycan is linked to N395.

It belongs to the peptidase M20A family. Zn(2+) is required as a cofactor.

It is found in the secreted. This is Probable carboxypeptidase ARB_01041 from Arthroderma benhamiae (strain ATCC MYA-4681 / CBS 112371) (Trichophyton mentagrophytes).